Here is a 178-residue protein sequence, read N- to C-terminus: Large ribosomal subunit protein uL6 (178 aa).

The protein belongs to the universal ribosomal protein uL6 family. In terms of assembly, part of the 50S ribosomal subunit.

This protein binds to the 23S rRNA, and is important in its secondary structure. It is located near the subunit interface in the base of the L7/L12 stalk, and near the tRNA binding site of the peptidyltransferase center. The chain is Large ribosomal subunit protein uL6 from Corynebacterium diphtheriae (strain ATCC 700971 / NCTC 13129 / Biotype gravis).